The sequence spans 183 residues: TATA-box-binding protein 1 (183 aa).

A run of 2 repeats spans residues 8-84 and 99-177.

The protein belongs to the TBP family.

General factor that plays a role in the activation of archaeal genes transcribed by RNA polymerase. Binds specifically to the TATA box promoter element which lies close to the position of transcription initiation. This chain is TATA-box-binding protein 1, found in Methanosarcina acetivorans (strain ATCC 35395 / DSM 2834 / JCM 12185 / C2A).